The sequence spans 238 residues: MFKKLIDKHKKYVYHRINKMALFATIGLLGVGLVYSAKNLYTHQDNQVSIKKSFYLNKKEVRQKLIHEIDVPRILPRLKSEEEKQAESRKKYLNATITYLTEENKKAAKHTKTKKVQKTNTKRNLDKAVSKSTNAKAVKSHEVVATAYTAFCSTGCTGKTRTGYDVSNTSYYNGKRIIAVDPEVIPLYSLVQVSYEGNSFQAYAIDTGGDIKNNRIDILMDSEQEANAFGRKNVRVSW.

Residues methionine 1–alanine 37 form the signal peptide. The span at threonine 111–threonine 121 shows a compositional bias: basic residues. The segment at threonine 111–serine 132 is disordered.

The protein is SPbeta prophage-derived uncharacterized protein YorM (yorM) of Bacillus subtilis (strain 168).